The following is a 342-amino-acid chain: Cytosolic Fe-S cluster assembly factor NBP35 (342 aa).

[4Fe-4S] cluster contacts are provided by C33, C47, C50, and C56. 86 to 93 serves as a coordination point for ATP; it reads GKGGVGKS. [4Fe-4S] cluster-binding residues include C259 and C262.

It belongs to the Mrp/NBP35 ATP-binding proteins family. NUBP1/NBP35 subfamily. Heterotetramer of 2 NBP35 and 2 CFD1 chains. [4Fe-4S] cluster serves as cofactor.

The protein resides in the cytoplasm. In terms of biological role, component of the cytosolic iron-sulfur (Fe/S) protein assembly (CIA) machinery. Required for maturation of extramitochondrial Fe-S proteins. The NBP35-CFD1 heterotetramer forms a Fe-S scaffold complex, mediating the de novo assembly of an Fe-S cluster and its transfer to target apoproteins. This is Cytosolic Fe-S cluster assembly factor NBP35 from Gibberella zeae (strain ATCC MYA-4620 / CBS 123657 / FGSC 9075 / NRRL 31084 / PH-1) (Wheat head blight fungus).